Consider the following 471-residue polypeptide: PE-PGRS family protein PE_PGRS33 (471 aa).

An essential for translocation to the cell surface region spans residues 1–30 (MSFVVTIPEALAAVATDLAGIGSTIGTANA). The PE domain maps to 1–93 (MSFVVTIPEA…AGSYAAAEAA (93 aa)). Residues 140–230 (GNGGAGGSGA…GLFFGVGGAG (91 aa)) form an interacts with TLR2 region.

The protein belongs to the mycobacterial PE family. PGRS subfamily. Interacts with human TLR2.

The protein localises to the secreted. Its subcellular location is the cell wall. It is found in the cell surface. It localises to the cell outer membrane. Functionally, induces TNF-alpha release through human Toll-like receptor 2 (TLR2) signaling pathway, leading to macrophage apoptosis. This chain is PE-PGRS family protein PE_PGRS33 (PE_PGRS33), found in Mycobacterium tuberculosis (strain CDC 1551 / Oshkosh).